Reading from the N-terminus, the 311-residue chain is Acetyl-coenzyme A carboxylase carboxyl transferase subunit alpha (311 aa).

The CoA carboxyltransferase C-terminal domain maps to Asn-36–Glu-286.

Belongs to the AccA family. In terms of assembly, acetyl-CoA carboxylase is a heterohexamer composed of biotin carboxyl carrier protein (AccB), biotin carboxylase (AccC) and two subunits each of ACCase subunit alpha (AccA) and ACCase subunit beta (AccD).

The protein resides in the cytoplasm. The catalysed reaction is N(6)-carboxybiotinyl-L-lysyl-[protein] + acetyl-CoA = N(6)-biotinyl-L-lysyl-[protein] + malonyl-CoA. It functions in the pathway lipid metabolism; malonyl-CoA biosynthesis; malonyl-CoA from acetyl-CoA: step 1/1. Its function is as follows. Component of the acetyl coenzyme A carboxylase (ACC) complex. First, biotin carboxylase catalyzes the carboxylation of biotin on its carrier protein (BCCP) and then the CO(2) group is transferred by the carboxyltransferase to acetyl-CoA to form malonyl-CoA. The polypeptide is Acetyl-coenzyme A carboxylase carboxyl transferase subunit alpha (Campylobacter lari (strain RM2100 / D67 / ATCC BAA-1060)).